The sequence spans 168 residues: Sperm acrosome-associated protein 9 (168 aa).

Microtubule inner protein component of sperm flagellar doublet microtubules. Interacts with CABP1 and CALR. Interacts with INCA1. Interacts with microtubules. As to expression, expressed in sperm (at protein level). Expressed from almost all the cell types of testis, with abundant expression in round and elongated spermatids (at protein level). Predominantly expressed in tissues containing motile cilia.

It localises to the cytoplasm. Its subcellular location is the cytoplasmic vesicle. The protein localises to the secretory vesicle. It is found in the acrosome. The protein resides in the cytoskeleton. It localises to the cilium basal body. Its subcellular location is the flagellum axoneme. The protein localises to the cilium axoneme. It is found in the nucleus. Functionally, microtubule inner protein (MIP) part of the dynein-decorated doublet microtubules (DMTs) of multiciliated respiratory cells and the distal singlet microtubules of monoflagellated spermatozoa. Forms an extensive interaction network cross-linking the lumen of axonemal doublet microtubules. The chain is Sperm acrosome-associated protein 9 from Mus musculus (Mouse).